The primary structure comprises 398 residues: Riboflavin biosynthesis protein RibBA (398 aa).

The tract at residues 1–199 (MFHPIEEALD…IKDLIQYRYN (199 aa)) is DHBP synthase. D-ribulose 5-phosphate is bound by residues 26–27 (RE), D31, 138–142 (RAGHT), and E162. E27 provides a ligand contact to Mg(2+). H141 provides a ligand contact to Mg(2+). Residues 200–398 (LTTLVEREVD…MNKLGHLLHF (199 aa)) are GTP cyclohydrolase II. Residue 251 to 255 (RVHSE) participates in GTP binding. Residues C256, C267, and C269 each contribute to the Zn(2+) site. GTP is bound by residues Q272, 294 to 296 (EGR), and T316. D328 (proton acceptor; for GTP cyclohydrolase activity) is an active-site residue. R330 functions as the Nucleophile; for GTP cyclohydrolase activity in the catalytic mechanism. GTP is bound by residues T351 and K356.

In the N-terminal section; belongs to the DHBP synthase family. The protein in the C-terminal section; belongs to the GTP cyclohydrolase II family. It depends on Mg(2+) as a cofactor. Mn(2+) serves as cofactor. Zn(2+) is required as a cofactor.

It carries out the reaction D-ribulose 5-phosphate = (2S)-2-hydroxy-3-oxobutyl phosphate + formate + H(+). It catalyses the reaction GTP + 4 H2O = 2,5-diamino-6-hydroxy-4-(5-phosphoribosylamino)-pyrimidine + formate + 2 phosphate + 3 H(+). Its pathway is cofactor biosynthesis; riboflavin biosynthesis; 2-hydroxy-3-oxobutyl phosphate from D-ribulose 5-phosphate: step 1/1. The protein operates within cofactor biosynthesis; riboflavin biosynthesis; 5-amino-6-(D-ribitylamino)uracil from GTP: step 1/4. In terms of biological role, catalyzes the conversion of D-ribulose 5-phosphate to formate and 3,4-dihydroxy-2-butanone 4-phosphate. Catalyzes the conversion of GTP to 2,5-diamino-6-ribosylamino-4(3H)-pyrimidinone 5'-phosphate (DARP), formate and pyrophosphate. This Bacillus subtilis (strain 168) protein is Riboflavin biosynthesis protein RibBA.